The chain runs to 469 residues: 3-isopropylmalate dehydratase large subunit (469 aa).

Residues Cys347, Cys407, and Cys410 each coordinate [4Fe-4S] cluster.

The protein belongs to the aconitase/IPM isomerase family. LeuC type 1 subfamily. In terms of assembly, heterodimer of LeuC and LeuD. It depends on [4Fe-4S] cluster as a cofactor.

The catalysed reaction is (2R,3S)-3-isopropylmalate = (2S)-2-isopropylmalate. Its pathway is amino-acid biosynthesis; L-leucine biosynthesis; L-leucine from 3-methyl-2-oxobutanoate: step 2/4. Functionally, catalyzes the isomerization between 2-isopropylmalate and 3-isopropylmalate, via the formation of 2-isopropylmaleate. The protein is 3-isopropylmalate dehydratase large subunit of Prochlorococcus marinus subsp. pastoris (strain CCMP1986 / NIES-2087 / MED4).